A 378-amino-acid chain; its full sequence is Chorismate synthase (378 aa).

2 residues coordinate NADP(+): arginine 48 and arginine 54. FMN contacts are provided by residues 125–127 (RSS), 238–239 (NA), glycine 278, 293–297 (KPTSS), and arginine 319.

It belongs to the chorismate synthase family. Homotetramer. Requires FMNH2 as cofactor.

The enzyme catalyses 5-O-(1-carboxyvinyl)-3-phosphoshikimate = chorismate + phosphate. Its pathway is metabolic intermediate biosynthesis; chorismate biosynthesis; chorismate from D-erythrose 4-phosphate and phosphoenolpyruvate: step 7/7. Catalyzes the anti-1,4-elimination of the C-3 phosphate and the C-6 proR hydrogen from 5-enolpyruvylshikimate-3-phosphate (EPSP) to yield chorismate, which is the branch point compound that serves as the starting substrate for the three terminal pathways of aromatic amino acid biosynthesis. This reaction introduces a second double bond into the aromatic ring system. In Azoarcus sp. (strain BH72), this protein is Chorismate synthase.